Consider the following 711-residue polypeptide: Consortin (711 aa).

Disordered regions lie at residues 1–157 (MDDS…NDPP), 294–332 (AVGTEAAAKEPEIETCPSTDPSGDRHEEEPQESSPGCHQ), 370–389 (ETAGSRSGPAAASNACKDSS), 394–432 (PPTEDHCGVARDPKVAPPSESVAEQKLSTGDDGALPGLI), and 457–496 (PRDQPHSSEVAEPRQPDVTASDGKSAQSQAGLETGPESAL). Topologically, residues 1–650 (MDDSDPPTYS…LEQDEVGGGS (650 aa)) are cytoplasmic. The span at 63 to 77 (VSEQDSLNNNESFPS) shows a compositional bias: polar residues. Residues 109–120 (PAKRSPRAKKSS) show a composition bias toward basic residues. Composition is skewed to basic and acidic residues over residues 396–407 (TEDHCGVARDPK) and 457–471 (PRDQPHSSEVAEPRQ). Over residues 478–487 (DGKSAQSQAG) the composition is skewed to polar residues. The helical transmembrane segment at 651-671 (CILLILLCIATVFLSVGGTAL) threads the bilayer. Over 672–711 (YCTLGNIESPVCTDFADNVDFYYTKLLQGVAGLKHWVYLS) the chain is Extracellular.

Belongs to the CNST family. Interacts with connexins GJA1/CX43, GJB1/CX32, GJB2/CX26, GJB3/CX31, GJB6/CX30 and GJC1/CX45. Also interacts with GGA1 and GGA2. Does not interact with PANX1.

Its subcellular location is the cell membrane. It localises to the golgi apparatus. It is found in the trans-Golgi network membrane. The protein resides in the cytoplasmic vesicle. The protein localises to the secretory vesicle. In terms of biological role, required for targeting of connexins to the plasma membrane. This Mus musculus (Mouse) protein is Consortin (Cnst).